The sequence spans 456 residues: Serine--tRNA ligase (456 aa).

252–254 (TSE) lines the L-serine pocket. ATP is bound by residues 283–285 (RKE) and valine 299. Residue glutamate 306 coordinates L-serine. 370–373 (ELVS) serves as a coordination point for ATP. Threonine 404 is an L-serine binding site.

This sequence belongs to the class-II aminoacyl-tRNA synthetase family. Type-1 seryl-tRNA synthetase subfamily. In terms of assembly, homodimer. The tRNA molecule binds across the dimer.

It is found in the cytoplasm. It carries out the reaction tRNA(Ser) + L-serine + ATP = L-seryl-tRNA(Ser) + AMP + diphosphate + H(+). The enzyme catalyses tRNA(Sec) + L-serine + ATP = L-seryl-tRNA(Sec) + AMP + diphosphate + H(+). It functions in the pathway aminoacyl-tRNA biosynthesis; selenocysteinyl-tRNA(Sec) biosynthesis; L-seryl-tRNA(Sec) from L-serine and tRNA(Sec): step 1/1. Functionally, catalyzes the attachment of serine to tRNA(Ser). Is also able to aminoacylate tRNA(Sec) with serine, to form the misacylated tRNA L-seryl-tRNA(Sec), which will be further converted into selenocysteinyl-tRNA(Sec). The polypeptide is Serine--tRNA ligase (Korarchaeum cryptofilum (strain OPF8)).